The sequence spans 354 residues: Homer protein homolog 1 (354 aa).

The WH1 domain occupies 1–110 (MGEQPIFSTR…EKFQEFKEAA (110 aa)). Gly-2 carries the N-acetylglycine modification. The disordered stretch occupies residues 114 to 172 (KEKSQEKMELTSTPSQESAGGDLQSPLTPESINGTDDERTPDLTQNSEPRPEPTQNALP). 2 stretches are compositionally biased toward polar residues: residues 138 to 147 (SPLTPESING) and 155 to 172 (DLTQ…NALP). A coiled-coil region spans residues 181 to 352 (KHWEAELATL…LRDNLAKLLE (172 aa)). The interval 290–354 (KLQEVEIRNK…DNLAKLLERS (65 aa)) is required for tetramerization. Residue Ser-306 is modified to Phosphoserine.

The protein belongs to the Homer family. As to quaternary structure, tetramer; this tetrameric structure is critical for forming the high-order complex with SHANK1, which in turn is necessary for the structural and functional integrity of dendritic spines. Interacts with GRM1, GRM5, ITPR1, DNM3, RYR1, RYR2 and SHANK3. Interacts with IFT57 and OPHN1. Encodes a coiled-coil structure that mediates homo- and heteromultimerization. Interacts with SHANK1; forms high-order polymerized complex with a mesh-like network structure, at least composed of SHANK1, HOMER1 and DLGAP1; the complex formation is SHANK1 multimerization dependent. Interacts with NFATC4. Interacts with DAGLA (via PPXXF motif); this interaction is required for the cell membrane localization of DAGLA. Interacts with SRGAP2.

It localises to the cytoplasm. The protein resides in the postsynaptic density. The protein localises to the synapse. Its subcellular location is the cell projection. It is found in the dendritic spine. Its function is as follows. Postsynaptic density scaffolding protein. Binds and cross-links cytoplasmic regions of GRM1, GRM5, ITPR1, DNM3, RYR1, RYR2, SHANK1 and SHANK3. By physically linking GRM1 and GRM5 with ER-associated ITPR1 receptors, it aids the coupling of surface receptors to intracellular calcium release. May also couple GRM1 to PI3 kinase through its interaction with AGAP2. Forms a high-order complex with SHANK1, which in turn is necessary for the structural and functional integrity of dendritic spines. Negatively regulates T cell activation by inhibiting the calcineurin-NFAT pathway. Acts by competing with calcineurin/PPP3CA for NFAT protein binding, hence preventing NFAT activation by PPP3CA. This is Homer protein homolog 1 from Bos taurus (Bovine).